Reading from the N-terminus, the 1481-residue chain is DNA excision repair protein ERCC-6 (1481 aa).

Residues 1–506 (MFHEEVPNST…GFLFKKLFKY (506 aa)) are N-terminal domain; essential for its chromatin remodeling activity. Position 158 is a phosphoserine; by CDK2 (S158). K170 bears the N6-methylated lysine; by EHMT2 mark. K256 is covalently cross-linked (Glycyl lysine isopeptide (Lys-Gly) (interchain with G-Cter in SUMO2)). At K298 the chain carries N6-methylated lysine; by EHMT2. The disordered stretch occupies residues 309–452 (AIETKADQRS…RKVARRQDDG (144 aa)). Residues 327–337 (RLKKHSRKLQR) show a composition bias toward basic residues. A compositionally biased stretch (basic and acidic residues) spans 353–363 (KPLEPEVRPEA). Acidic residues-rich tracts occupy residues 378-390 (DGEEEEEQEEEEG) and 420-435 (EIDDDFFPSSEEEDEA). Phosphoserine occurs at positions 428 and 429. N6-methylated lysine; by EHMT2 is present on K444. S482 and S485 each carry phosphoserine. A Helicase ATP-binding domain is found at 515–691 (WELHCQQAGG…WSLFDFIFPG (177 aa)). Residue 528–535 (DEMGLGKT) coordinates ATP. Positions 642 to 645 (DEGH) match the DEAH box motif. The Helicase C-terminal domain occupies 839-998 (VVESLLKIWH…RRFFKSNDLY (160 aa)). Disordered stretches follow at residues 1040–1096 (LGTD…NRAS), 1114–1238 (SVMS…DRSS), and 1307–1372 (GHRG…GAPS). An N6-methylated lysine; by EHMT2 modification is found at K1047. Over residues 1138–1147 (ASTSEKQGSS) the composition is skewed to polar residues. Residues 1192–1201 (QPKQKAKNSK) show a composition bias toward basic residues. Residues 1202–1212 (HCRDAKFEGTR) are compositionally biased toward basic and acidic residues. Polar residues predominate over residues 1330-1345 (LPVQHPSSLTEKTQNN). The span at 1346 to 1364 (MKKEGKAHTPEHFSGKEDG) shows a compositional bias: basic and acidic residues. The CSA-interacting motif (CIM) signature appears at 1373–1385 (SSSLLARMRARNH). Residues 1387-1416 (ILPERLESDSEHLAEAAAVPPCGTEHDDLL) form a ubiquitin-binding domain (UBD) region. Residues 1417–1481 (VDMRNFIAFQ…GIWKLKPEYC (65 aa)) are winged-helix domain (WHD). The essential for its interaction with RNA polymerase II, transcription-coupled nucleotide excision repair activity, association with chromatin after UV irradiation and for mediating the UV-induced translocation of ERRC8 to the nuclear matrix stretch occupies residues 1434 to 1481 (STQEILQEFESKLSVAQSCVFRELLRNLCNFHRTPGGEGIWKLKPEYC).

The protein belongs to the SNF2/RAD54 helicase family. As to quaternary structure, homodimer. Binds DNA. Interacts with ERCC8. Interacts with RNA polymerase II; interaction is enhanced by UV irradiation. Component of the B-WICH complex, at least composed of SMARCA5/SNF2H, BAZ1B/WSTF, SF3B1, DEK, MYO1C, ERCC6, MYBBP1A and DDX21. Interacts with KIAA1530/UVSSA. Interacts with ELOA and CUL5; the interaction is induced by DNA damaging agents or by inhibitors of RNA polymerase II elongation. Interacts (via WHD region) with RIF1. Interacts with SMARCC2/BAF170, SMARCB1/BAF47 and the neuron-specific chromatin remodeling complex (nBAF complex). Interacts with ERCC5/XPG (via C-terminus); the interaction stimulates ERCC6/CSB binding to DNA repair bubble and ERCC6/CSB ATPase activity. May form a complex composed of RNA polymerase II, ERCC6/CSB and ERCC5/XPG which associates with the DNA repair bubble during transcription-coupled nucleotide excision repair. Interacts with CAND1, CSTF1, DDX3X, DDX5, DDX17, DDX23, DHX36, HDAC1, HNRNPU, MTA2, PRPF3, PSMD3, RBBP4, SFPQ, SMARCA1, SMARCA2, TOP1, USP7 and XRCC5. Phosphorylated in a cell cycle-dependent manner at Ser-158 by cyclin A-CDK2 in response to DNA damage. Phosphorylation at this site promotes the intramolecular interaction of the N-terminal domain with the helicase ATP-binding domain, thereby probably releasing the inhibitory effect of the N-terminal domain on its ATPase activity. Phosphorylation is essential for its chromatin remodeling activity. Post-translationally, ubiquitinated at the C-terminus. Ubiquitination by the CSA complex leads to ERCC6 proteasomal degradation in a UV-dependent manner. Stabilized following interaction with KIAA1530/UVSSA, which promotes recruitment of deubiquitinating enzyme USP7, leading to deubiquitination of ERCC6 thereby preventing UV-induced degradation of ERCC6 by the proteasome.

It localises to the nucleus. It is found in the chromosome. The catalysed reaction is ATP + H2O = ADP + phosphate + H(+). Its function is as follows. Essential factor involved in transcription-coupled nucleotide excision repair (TC-NER), a process during which RNA polymerase II-blocking lesions are rapidly removed from the transcribed strand of active genes. Plays a central role in the initiation of the TC-NER process: specifically recognizes and binds RNA polymerase II stalled at a lesion, and mediates recruitment of ERCC8/CSA, initiating DNA damage excision by TFIIH recruitment. Upon DNA-binding, it locally modifies DNA conformation by wrapping the DNA around itself, thereby modifying the interface between stalled RNA polymerase II and DNA. Acts as a chromatin remodeler at DSBs; DNA-dependent ATPase-dependent activity is essential for this function. Plays an important role in regulating the choice of the DNA double-strand breaks (DSBs) repair pathway and G2/M checkpoint activation; DNA-dependent ATPase activity is essential for this function. Regulates the DNA repair pathway choice by inhibiting non-homologous end joining (NHEJ), thereby promoting the homologous recombination (HR)-mediated repair of DSBs during the S/G2 phases of the cell cycle. Mediates the activation of the ATM- and CHEK2-dependent DNA damage responses thus preventing premature entry of cells into mitosis following the induction of DNA DSBs. Remodels chromatin by evicting histones from chromatin flanking DSBs, limiting RIF1 accumulation at DSBs thereby promoting BRCA1-mediated HR. Required for stable recruitment of ELOA and CUL5 to DNA damage sites. Also involved in UV-induced translocation of ERCC8 to the nuclear matrix. Essential for neuronal differentiation and neuritogenesis; regulates transcription and chromatin remodeling activities required during neurogenesis. In Mus musculus (Mouse), this protein is DNA excision repair protein ERCC-6 (Ercc6).